The following is a 431-amino-acid chain: Adenylosuccinate synthetase (431 aa).

Residues 13–19 (GDEGKGK) and 41–43 (GHT) contribute to the GTP site. Aspartate 14 (proton acceptor) is an active-site residue. Residues aspartate 14 and glycine 41 each coordinate Mg(2+). Residues 14-17 (DEGK), 39-42 (NAGH), threonine 130, arginine 144, glutamine 225, threonine 240, and arginine 304 contribute to the IMP site. The Proton donor role is filled by histidine 42. A substrate-binding site is contributed by 300-306 (AVTGRPR). GTP is bound by residues arginine 306, 332–334 (KLD), and 415–417 (STG).

It belongs to the adenylosuccinate synthetase family. In terms of assembly, homodimer. It depends on Mg(2+) as a cofactor.

The protein resides in the cytoplasm. It catalyses the reaction IMP + L-aspartate + GTP = N(6)-(1,2-dicarboxyethyl)-AMP + GDP + phosphate + 2 H(+). Its pathway is purine metabolism; AMP biosynthesis via de novo pathway; AMP from IMP: step 1/2. Its function is as follows. Plays an important role in the de novo pathway of purine nucleotide biosynthesis. Catalyzes the first committed step in the biosynthesis of AMP from IMP. This is Adenylosuccinate synthetase from Legionella pneumophila (strain Paris).